The sequence spans 525 residues: GMP synthase [glutamine-hydrolyzing] (525 aa).

The Glutamine amidotransferase type-1 domain maps to arginine 9–leucine 207. The active-site Nucleophile is cysteine 86. Active-site residues include histidine 181 and glutamate 183. The GMPS ATP-PPase domain occupies tryptophan 208 to arginine 400. Serine 235–alanine 241 contacts ATP.

As to quaternary structure, homodimer.

It carries out the reaction XMP + L-glutamine + ATP + H2O = GMP + L-glutamate + AMP + diphosphate + 2 H(+). It participates in purine metabolism; GMP biosynthesis; GMP from XMP (L-Gln route): step 1/1. In terms of biological role, catalyzes the synthesis of GMP from XMP. This Hamiltonella defensa subsp. Acyrthosiphon pisum (strain 5AT) protein is GMP synthase [glutamine-hydrolyzing].